The primary structure comprises 229 residues: NAD(P)H-hydrate epimerase (229 aa).

In terms of domain architecture, YjeF N-terminal spans 9–216; the sequence is AISVDEELFN…KLEEKYAMNL (208 aa). Position 59 to 63 (59 to 63) interacts with (6S)-NADPHX; sequence NNGGD. K(+)-binding residues include Asn60 and Asp124. (6S)-NADPHX-binding positions include 128–134 and Asp157; that span reads GFSFKPP. Ser160 lines the K(+) pocket.

It belongs to the NnrE/AIBP family. The cofactor is K(+).

The enzyme catalyses (6R)-NADHX = (6S)-NADHX. It catalyses the reaction (6R)-NADPHX = (6S)-NADPHX. In terms of biological role, catalyzes the epimerization of the S- and R-forms of NAD(P)HX, a damaged form of NAD(P)H that is a result of enzymatic or heat-dependent hydration. This is a prerequisite for the S-specific NAD(P)H-hydrate dehydratase to allow the repair of both epimers of NAD(P)HX. In Anopheles gambiae (African malaria mosquito), this protein is NAD(P)H-hydrate epimerase.